A 366-amino-acid chain; its full sequence is Ferredoxin--NADP reductase (366 aa).

FAD contacts are provided by Asp51, Gln59, Tyr64, Val104, Phe139, Asp308, and Thr349.

This sequence belongs to the ferredoxin--NADP reductase type 2 family. As to quaternary structure, homodimer. FAD serves as cofactor.

It catalyses the reaction 2 reduced [2Fe-2S]-[ferredoxin] + NADP(+) + H(+) = 2 oxidized [2Fe-2S]-[ferredoxin] + NADPH. This chain is Ferredoxin--NADP reductase, found in Methylibium petroleiphilum (strain ATCC BAA-1232 / LMG 22953 / PM1).